Reading from the N-terminus, the 311-residue chain is p-hydroxybenzoic acid efflux pump subunit AaeA (311 aa).

Residues 11 to 31 (VGITVLVVVLAVIAIFNVWAF) traverse the membrane as a helical segment.

The protein belongs to the membrane fusion protein (MFP) (TC 8.A.1) family.

It localises to the cell inner membrane. In terms of biological role, forms an efflux pump with AaeB. The protein is p-hydroxybenzoic acid efflux pump subunit AaeA of Yersinia pestis bv. Antiqua (strain Antiqua).